The chain runs to 277 residues: Methyltransferase str3 (277 aa).

It belongs to the methyltransferase superfamily. LaeA methyltransferase family.

It participates in mycotoxin biosynthesis. In terms of biological role, methyltransferase; part of the gene cluster that mediates the biosynthesis of strobilurin A, an antifungal polyketide that contains a key beta-methoxyacrylate toxophore that targets the complex III of the mitochondrial electron transport chain. Strobilurin biosynthesis begins with construction of benzoyl CoA by step-wise elimination of ammonia from phenylalanine by the phenylalanine ammonia-lyase str11, oxygenation by str8 and retro-Claisen reaction to form benzoic acid, which is activated to its CoA thiolester benzoyl CoA by the dedicated CoA ligase str10. Benzoyl CoA forms the starter unit for the highly reducing polyketide synthase stpks1 that produces the polyketide prestrobilutin A. The FAD-dependent oxygenase str9 then catalyzes the key oxidative rearrangement responsible for the creation of the beta-methoxyacrylate toxophore. Str9 performs epoxidation of the 2,3 olefin of prestrobilutin A, followed by Meinwald rearrangement to furnish the aldehyde intermediate. Rapid enolization of the aldehyde intermediate would give the beta-methoxyacrylate skeleton and methylations catalyzed by str2 and str3 complete the synthesis and lead to the production of strobilurin A. The short-chain dehydrogenase stl2 and the dehydrogenase str4 play a role in the shunt pathway leading to the production of bolineol. The cluster encodes no obvious halogenase gene that could be involved in production of strobilurin B, nor any obvious dimethylallyl-transferase that could be involved in the production of strobilurin G. It is possible that unknown proteins encoded in, or near, the cluster (such as str1 or stl1) may form new classes of halogenases or dimethylally-transferases, or that the responsible genes are located elsewhere on the genome. Similarly, proteins encoded by str5/str6 hydrolases appear to have no chemical role in the biosynthesis of strobilurin A. Finally, no obvious self-resistance gene is found within the cluster. The polypeptide is Methyltransferase str3 (Strobilurus tenacellus).